Consider the following 1415-residue polypeptide: DNA-directed RNA polymerase subunit beta'' (1415 aa).

The Zn(2+) site is built by Cys217, Cys291, Cys298, and Cys301.

The protein belongs to the RNA polymerase beta' chain family. RpoC2 subfamily. As to quaternary structure, in plastids the minimal PEP RNA polymerase catalytic core is composed of four subunits: alpha, beta, beta', and beta''. When a (nuclear-encoded) sigma factor is associated with the core the holoenzyme is formed, which can initiate transcription. It depends on Zn(2+) as a cofactor.

It localises to the plastid. The protein resides in the chloroplast. The enzyme catalyses RNA(n) + a ribonucleoside 5'-triphosphate = RNA(n+1) + diphosphate. In terms of biological role, DNA-dependent RNA polymerase catalyzes the transcription of DNA into RNA using the four ribonucleoside triphosphates as substrates. This is DNA-directed RNA polymerase subunit beta'' from Phaeodactylum tricornutum (strain CCAP 1055/1).